The following is a 233-amino-acid chain: Adenosine 5'-phosphosulfate reductase 1 (233 aa).

Positions 120, 121, 203, and 206 each coordinate [4Fe-4S] cluster. Cys-229 acts as the Nucleophile; cysteine thiosulfonate intermediate in catalysis.

Belongs to the PAPS reductase family. CysH subfamily. Requires [4Fe-4S] cluster as cofactor.

The protein localises to the cytoplasm. It catalyses the reaction [thioredoxin]-disulfide + sulfite + AMP + 2 H(+) = adenosine 5'-phosphosulfate + [thioredoxin]-dithiol. It functions in the pathway sulfur metabolism; hydrogen sulfide biosynthesis; sulfite from sulfate. Catalyzes the formation of sulfite from adenosine 5'-phosphosulfate (APS) using thioredoxin as an electron donor. The sequence is that of Adenosine 5'-phosphosulfate reductase 1 (cysH) from Bacillus subtilis (strain 168).